The sequence spans 106 residues: Pyrimidine/purine nucleoside phosphorylase (106 aa).

Belongs to the nucleoside phosphorylase PpnP family.

The enzyme catalyses a purine D-ribonucleoside + phosphate = a purine nucleobase + alpha-D-ribose 1-phosphate. It catalyses the reaction adenosine + phosphate = alpha-D-ribose 1-phosphate + adenine. It carries out the reaction cytidine + phosphate = cytosine + alpha-D-ribose 1-phosphate. The catalysed reaction is guanosine + phosphate = alpha-D-ribose 1-phosphate + guanine. The enzyme catalyses inosine + phosphate = alpha-D-ribose 1-phosphate + hypoxanthine. It catalyses the reaction thymidine + phosphate = 2-deoxy-alpha-D-ribose 1-phosphate + thymine. It carries out the reaction uridine + phosphate = alpha-D-ribose 1-phosphate + uracil. The catalysed reaction is xanthosine + phosphate = alpha-D-ribose 1-phosphate + xanthine. Functionally, catalyzes the phosphorolysis of diverse nucleosides, yielding D-ribose 1-phosphate and the respective free bases. Can use uridine, adenosine, guanosine, cytidine, thymidine, inosine and xanthosine as substrates. Also catalyzes the reverse reactions. This Paraburkholderia xenovorans (strain LB400) protein is Pyrimidine/purine nucleoside phosphorylase.